The chain runs to 695 residues: Elongation factor G (695 aa).

Residues 5–280 (SHYRNIGIFA…AVIDFLPSPT (276 aa)) form the tr-type G domain. GTP is bound by residues 14–21 (AHVDAGKT), 78–82 (DTPGH), and 132–135 (NKLD). Positions 279–299 (PTEVDPQPLTDEETGEPTGEV) are disordered.

This sequence belongs to the TRAFAC class translation factor GTPase superfamily. Classic translation factor GTPase family. EF-G/EF-2 subfamily.

It localises to the cytoplasm. Functionally, catalyzes the GTP-dependent ribosomal translocation step during translation elongation. During this step, the ribosome changes from the pre-translocational (PRE) to the post-translocational (POST) state as the newly formed A-site-bound peptidyl-tRNA and P-site-bound deacylated tRNA move to the P and E sites, respectively. Catalyzes the coordinated movement of the two tRNA molecules, the mRNA and conformational changes in the ribosome. The protein is Elongation factor G of Alteromonas mediterranea (strain DSM 17117 / CIP 110805 / LMG 28347 / Deep ecotype).